We begin with the raw amino-acid sequence, 305 residues long: Nucleotide-binding protein Mpe_A3336 (305 aa).

22 to 29 serves as a coordination point for ATP; that stretch reads GISGSGKS. 74–77 lines the GTP pocket; sequence DVRS.

The protein belongs to the RapZ-like family.

In terms of biological role, displays ATPase and GTPase activities. The protein is Nucleotide-binding protein Mpe_A3336 of Methylibium petroleiphilum (strain ATCC BAA-1232 / LMG 22953 / PM1).